The following is a 628-amino-acid chain: uncharacterized protein (628 aa).

Disordered stretches follow at residues 1–65 (MDTN…ISSA) and 80–125 (SLRN…VSLS). The span at 12–21 (ISPSIASSFP) shows a compositional bias: low complexity. Residues 25-37 (PFSSQNSTTSNPE) show a composition bias toward polar residues. Composition is skewed to low complexity over residues 48 to 64 (SSIIISQQPLSPSNISS) and 87 to 102 (SPHIPSPSSFSSSSSS). A compositionally biased stretch (basic and acidic residues) spans 103–116 (DLDKSMLDEKHPDS). 12 consecutive transmembrane segments (helical) span residues 157–177 (IITCLWITYFLSRSVTYSISL), 203–223 (VGTGLSYVSLIIFDLPSNLLM), 230–250 (LWLSRIQVTTGIIGACHAVLG), 259–279 (FIALRFFNGLAIAGMWPGFAF), 294–314 (IGWYYTAAQISSVATSLLSAA), 324–344 (LYGYQWMFLIWGVVAFTQGLF), 417–437 (LWPPIFMFFGVVGISNGLVNY), 454–474 (VSLLVAPIWVFDAIAILTVLP), 483–503 (MLFFVGSCLFVLAGLLITTFV), 511–531 (VGLLILGFGLGPTVPIIMTWV), 542–562 (VGVAAGLAIVSGLGNLGSVVA), and 583–603 (MCGMVGIAIVASIVMHMVQKF).

It belongs to the major facilitator superfamily. Allantoate permease family.

The protein resides in the membrane. This is an uncharacterized protein from Schizosaccharomyces pombe (strain 972 / ATCC 24843) (Fission yeast).